The chain runs to 88 residues: Large ribosomal subunit protein bL27 (88 aa).

Residues 1 to 21 (MAHKKGTGSTRNGRDSRAQRL) form a disordered region.

Belongs to the bacterial ribosomal protein bL27 family.

The polypeptide is Large ribosomal subunit protein bL27 (Picosynechococcus sp. (strain ATCC 27264 / PCC 7002 / PR-6) (Agmenellum quadruplicatum)).